We begin with the raw amino-acid sequence, 491 residues long: Cytochrome P450 2B4 (491 aa).

Residue serine 128 is modified to Phosphoserine; by PKA. Cysteine 436 provides a ligand contact to heme.

The protein belongs to the cytochrome P450 family. The cofactor is heme.

It is found in the endoplasmic reticulum membrane. Its subcellular location is the microsome membrane. It carries out the reaction an organic molecule + reduced [NADPH--hemoprotein reductase] + O2 = an alcohol + oxidized [NADPH--hemoprotein reductase] + H2O + H(+). In terms of biological role, cytochromes P450 are a group of heme-thiolate monooxygenases. In liver microsomes, this enzyme is involved in an NADPH-dependent electron transport pathway. It oxidizes a variety of structurally unrelated compounds, including steroids, fatty acids, and xenobiotics. In the epoxidation of arachidonic acid it has a unique preference for the 5,6-olefin. The protein is Cytochrome P450 2B4 (CYP2B4) of Oryctolagus cuniculus (Rabbit).